The chain runs to 596 residues: Fructan 1-exohydrolase (596 aa).

The N-terminal stretch at 1-20 is a signal peptide; the sequence is MAQAWAFLLPVLVLGSYVTS. Asp-75 is a catalytic residue. Residues Asn-168, Asn-236, and Asn-248 are each glycosylated (N-linked (GlcNAc...) asparagine). Cys-446 and Cys-492 are disulfide-bonded. An N-linked (GlcNAc...) asparagine glycan is attached at Asn-567.

Belongs to the glycosyl hydrolase 32 family.

It catalyses the reaction Hydrolysis of terminal, non-reducing (2-&gt;1)-linked beta-D-fructofuranose residues in fructans.. Inhibited by sucrose. In terms of biological role, hydrolyzes inulin-type beta-(2,1)-fructans. May play a role as a beta-(2,1)-trimmer during graminan biosynthesis. This is Fructan 1-exohydrolase from Aegilops tauschii (Tausch's goatgrass).